The chain runs to 148 residues: FAD synthase (148 aa).

ATP-binding positions include 9–10, 14–17, Asn-92, and Tyr-119; these read TF and HPGH.

It belongs to the archaeal FAD synthase family. As to quaternary structure, homodimer. Requires a divalent metal cation as cofactor.

The enzyme catalyses FMN + ATP + H(+) = FAD + diphosphate. It participates in cofactor biosynthesis; FAD biosynthesis; FAD from FMN: step 1/1. In terms of biological role, catalyzes the transfer of the AMP portion of ATP to flavin mononucleotide (FMN) to produce flavin adenine dinucleotide (FAD) coenzyme. This Methanolacinia petrolearia (strain DSM 11571 / OCM 486 / SEBR 4847) (Methanoplanus petrolearius) protein is FAD synthase.